The sequence spans 236 residues: UPF0257 lipoprotein YnfC (236 aa).

A signal peptide spans 1 to 16 (MKKPLLLTLLCMILAG). The N-palmitoyl cysteine moiety is linked to residue C17. The S-diacylglycerol cysteine moiety is linked to residue C17.

The protein belongs to the UPF0257 family.

The protein localises to the cell membrane. This Salmonella paratyphi C (strain RKS4594) protein is UPF0257 lipoprotein YnfC.